A 449-amino-acid polypeptide reads, in one-letter code: Tubulin alpha chain (449 aa).

Residue Gln11 participates in GTP binding. Lys40 is modified (N6-acetyllysine). Residues Glu71, Ser140, Gly144, Thr145, Thr179, Asn206, and Asn228 each contribute to the GTP site. Residue Glu71 coordinates Mg(2+). Glu254 is an active-site residue.

It belongs to the tubulin family. As to quaternary structure, dimer of alpha and beta chains. A typical microtubule is a hollow water-filled tube with an outer diameter of 25 nm and an inner diameter of 15 nM. Alpha-beta heterodimers associate head-to-tail to form protofilaments running lengthwise along the microtubule wall with the beta-tubulin subunit facing the microtubule plus end conferring a structural polarity. Microtubules usually have 13 protofilaments but different protofilament numbers can be found in some organisms and specialized cells. Mg(2+) serves as cofactor. Undergoes a tyrosination/detyrosination cycle, the cyclic removal and re-addition of a C-terminal tyrosine residue by the enzymes tubulin tyrosine carboxypeptidase (TTCP) and tubulin tyrosine ligase (TTL), respectively. Post-translationally, some glutamate residues at the C-terminus are either polyglutamylated or polyglycylated. These 2 modifications occur exclusively on glutamate residues and result in either polyglutamate or polyglycine chains on the gamma-carboxyl group. Both modifications can coexist on the same protein on adjacent residues, and lowering polyglycylation levels increases polyglutamylation, and reciprocally. The precise function of such modifications is still unclear but they regulate the assembly and dynamics of axonemal microtubules. In terms of processing, acetylation of alpha chains at Lys-40 stabilizes microtubules and affects affinity and processivity of microtubule motors. This modification has a role in multiple cellular functions, ranging from cell motility, cell cycle progression or cell differentiation to intracellular trafficking and signaling.

It localises to the cytoplasm. The protein resides in the cytoskeleton. It catalyses the reaction GTP + H2O = GDP + phosphate + H(+). Functionally, tubulin is the major constituent of microtubules, a cylinder consisting of laterally associated linear protofilaments composed of alpha- and beta-tubulin heterodimers. Microtubules grow by the addition of GTP-tubulin dimers to the microtubule end, where a stabilizing cap forms. Below the cap, tubulin dimers are in GDP-bound state, owing to GTPase activity of alpha-tubulin. This Tetrahymena thermophila protein is Tubulin alpha chain.